Here is a 397-residue protein sequence, read N- to C-terminus: uncharacterized protein (397 aa).

It belongs to the ROK (NagC/XylR) family.

This is an uncharacterized protein from Escherichia coli (strain K12).